The primary structure comprises 217 residues: Protein-L-isoaspartate O-methyltransferase (217 aa).

Ser61 is a catalytic residue.

It belongs to the methyltransferase superfamily. L-isoaspartyl/D-aspartyl protein methyltransferase family.

It is found in the cytoplasm. It carries out the reaction [protein]-L-isoaspartate + S-adenosyl-L-methionine = [protein]-L-isoaspartate alpha-methyl ester + S-adenosyl-L-homocysteine. Its function is as follows. Catalyzes the methyl esterification of L-isoaspartyl residues in peptides and proteins that result from spontaneous decomposition of normal L-aspartyl and L-asparaginyl residues. It plays a role in the repair and/or degradation of damaged proteins. The protein is Protein-L-isoaspartate O-methyltransferase of Syntrophotalea carbinolica (strain DSM 2380 / NBRC 103641 / GraBd1) (Pelobacter carbinolicus).